Reading from the N-terminus, the 335-residue chain is GTPase Obg (335 aa).

The region spanning 1–158 (MFVDQITLEL…RQVELELKLI (158 aa)) is the Obg domain. Residues 126–145 (NTFFKTSVNRAPTKATPGKP) form a disordered region. The OBG-type G domain maps to 159–334 (ADIGLVGFPN…LYRFFTQRLA (176 aa)). GTP-binding positions include 165 to 172 (GFPNAGKS), 190 to 194 (FTTLA), 215 to 218 (DIPG), 285 to 288 (NKID), and 315 to 317 (SGL). The Mg(2+) site is built by Ser172 and Thr192.

Belongs to the TRAFAC class OBG-HflX-like GTPase superfamily. OBG GTPase family. As to quaternary structure, monomer. It depends on Mg(2+) as a cofactor.

The protein resides in the cytoplasm. An essential GTPase which binds GTP, GDP and possibly (p)ppGpp with moderate affinity, with high nucleotide exchange rates and a fairly low GTP hydrolysis rate. Plays a role in control of the cell cycle, stress response, ribosome biogenesis and in those bacteria that undergo differentiation, in morphogenesis control. The protein is GTPase Obg of Chlamydia pneumoniae (Chlamydophila pneumoniae).